A 199-amino-acid chain; its full sequence is MRPVKLVIVGDGAVGKTCMLISYTTNAFPNEYIPTVFENYNSSLVVDDVKINLGLWDTAGQEDYDRLRPLSYPSTDVFLVCFSVIAPASYENVEGKWKPEIDQHCPNVPIILVGTKIDIRDDPEQVKRLAEKNIVPIQPPQGDELAKKIGAVKYIECSALTQANLKLVFEEAVRAVLAKAAKEPTGKKEKGGKKGCSLF.

GTP-binding residues include alanine 13, glycine 15, lysine 16, threonine 17, cysteine 18, tyrosine 32, and threonine 35. A Mg(2+)-binding site is contributed by threonine 17. Short sequence motifs (switch) lie at residues 26-37 and 57-75; these read NAFPNEYIPTVF and DTAG…YPST. Threonine 35 serves as a coordination point for Mg(2+). GTP contacts are provided by lysine 116, aspartate 118, and alanine 159. Residue cysteine 196 is modified to Cysteine methyl ester. Cysteine 196 is lipidated: S-geranylgeranyl cysteine. A propeptide spans 197 to 199 (removed in mature form); the sequence is SLF.

The protein belongs to the small GTPase superfamily. Rho family. Requires Mg(2+) as cofactor.

The protein resides in the cell membrane. Its subcellular location is the cytoplasm. It is found in the cytoskeleton. The enzyme catalyses GTP + H2O = GDP + phosphate + H(+). Regulated by guanine nucleotide exchange factors (GEFs) which promote the exchange of bound GDP for free GTP, GTPase activating proteins (GAPs) which increase the GTP hydrolysis activity, and GDP dissociation inhibitors which inhibit the dissociation of the nucleotide from the GTPase. In terms of biological role, small GTPase which cycles between active GTP-bound and inactive GDP-bound states. Involved in actin cytoskeleton remodeling during capping of surface receptors and uroid formation. This chain is Rho-related protein racG, found in Entamoeba histolytica (strain ATCC 30459 / HM-1:IMSS / ABRM).